The chain runs to 324 residues: Probable pectinesterase A (324 aa).

The first 19 residues, 1–19, serve as a signal peptide directing secretion; that stretch reads MYLPSLVLGLLGFGLTAST. An N-linked (GlcNAc...) asparagine glycan is attached at asparagine 27. Residue glutamine 142 participates in substrate binding. Residue aspartate 165 is the Proton donor of the active site. Aspartate 186 (nucleophile) is an active-site residue. Positions 246 and 248 each coordinate substrate.

This sequence belongs to the pectinesterase family.

It is found in the secreted. The enzyme catalyses [(1-&gt;4)-alpha-D-galacturonosyl methyl ester](n) + n H2O = [(1-&gt;4)-alpha-D-galacturonosyl](n) + n methanol + n H(+). It participates in glycan metabolism; pectin degradation; 2-dehydro-3-deoxy-D-gluconate from pectin: step 1/5. In terms of biological role, involved in maceration and soft-rotting of plant tissue. This Aspergillus fumigatus (strain CBS 144.89 / FGSC A1163 / CEA10) (Neosartorya fumigata) protein is Probable pectinesterase A (pmeA).